The primary structure comprises 372 residues: Cytochrome b (372 aa).

The next 4 membrane-spanning stretches (helical) occupy residues Phe25–Ile45, Trp69–Ile90, Trp105–Leu125, and Phe170–Met190. Residues His75 and His89 each contribute to the heme b site. Positions 174 and 188 each coordinate heme b. Residue His193 participates in a ubiquinone binding. 4 consecutive transmembrane segments (helical) span residues His218–Thr238, Leu280–His300, Leu312–Thr332, and Phe339–Pro358.

This sequence belongs to the cytochrome b family. In terms of assembly, the cytochrome bc1 complex contains 3 respiratory subunits (MT-CYB, CYC1 and UQCRFS1), 2 core proteins (UQCRC1 and UQCRC2) and probably 6 low-molecular weight proteins. Heme b serves as cofactor.

The protein localises to the mitochondrion inner membrane. Component of the ubiquinol-cytochrome c reductase complex (complex III or cytochrome b-c1 complex) that is part of the mitochondrial respiratory chain. The b-c1 complex mediates electron transfer from ubiquinol to cytochrome c. Contributes to the generation of a proton gradient across the mitochondrial membrane that is then used for ATP synthesis. The protein is Cytochrome b (MT-CYB) of Pantherophis vulpinus (Western fox snake).